The primary structure comprises 541 residues: Circadian clock oscillator protein KaiC (541 aa).

Residues 1–40 are disordered; the sequence is MNQSLGPSEPEKPQDNTAEDSTEPTPDNHRADLSELRGIP. KaiC domains follow at residues 21-268 and 282-541; these read STEP…INIF and VRVS…EEGL. The span at 26 to 35 shows a compositional bias: basic and acidic residues; sequence PDNHRADLSE. G70, T71, G72, K73, T74, L75, S110, K245, L246, R247, T249, H251, T261, T311, G312, T313, G314, K315, and T316 together coordinate ATP. A Mg(2+)-binding site is contributed by T74. 2 residues coordinate Mg(2+): T316 and E339. W352 serves as a coordination point for ATP. S452 is subject to Phosphoserine; by autocatalysis. Position 453 is a phosphothreonine; by autocatalysis (T453). R472, K478, M479, R480, S482, H484, and K486 together coordinate ATP.

The protein belongs to the KaiC family. As to quaternary structure, homohexamer; hexamerization is dependent on ATP-binding. The KaiABC complex composition changes during the circadian cycle to control KaiC phosphorylation. Complexes KaiC(6), KaiA(2-4):KaiC(6), KaiB(6):KaiC(6) and KaiC(6):KaiB(6):KaiA(12) are among the most important forms, many form cooperatively. KaiC interacts with SasA, activating its autokinase function and leading to RpaA activation. Mg(2+) is required as a cofactor. In terms of processing, phosphorylated on serine and threonine residues by autocatalysis. Has a 4 step phosphorylation cycle; the autokinase acts first on Thr-453, then Ser-452. When Ser-452 is modified KaiC switches to an autophosphatase mode, acting first on phospho-Thr-453 then phospho-Ser-452.

The catalysed reaction is L-seryl-[protein] + ATP = O-phospho-L-seryl-[protein] + ADP + H(+). It carries out the reaction L-threonyl-[protein] + ATP = O-phospho-L-threonyl-[protein] + ADP + H(+). It catalyses the reaction ATP + H2O = ADP + phosphate + H(+). The interaction with KaiA enhances its phosphorylation status, while the interaction with KaiB decreases it. Its function is as follows. Central component of the KaiABC oscillator complex, which constitutes the main circadian regulator in cyanobacteria. Complex composition changes during the circadian cycle to control KaiC phosphorylation. KaiA stimulates KaiC autophosphorylation, while KaiB sequesters KaiA, leading to KaiC autodephosphorylation. Clock output pathways impact the RpaA transcriptional regulator. KaiC enhances the autophosphorylation activity of SasA, which then transfers its phosphate group to RpaA to activate it. KaiB and KaiC together enhance the phospho-RpaA dephosphatase activity of CikA. In terms of biological role, has a weak, temperature-independent ATPase activity; ATPase activity defines the circadian period. The phosphorylation state of KaiC modulates its ATPase activity and effects KaiB binding. This Parathermosynechococcus lividus (Thermostichus lividus) protein is Circadian clock oscillator protein KaiC.